Here is a 199-residue protein sequence, read N- to C-terminus: N-(5'-phosphoribosyl)anthranilate isomerase (199 aa).

It belongs to the TrpF family.

It carries out the reaction N-(5-phospho-beta-D-ribosyl)anthranilate = 1-(2-carboxyphenylamino)-1-deoxy-D-ribulose 5-phosphate. Its pathway is amino-acid biosynthesis; L-tryptophan biosynthesis; L-tryptophan from chorismate: step 3/5. The polypeptide is N-(5'-phosphoribosyl)anthranilate isomerase (Clostridium kluyveri (strain NBRC 12016)).